A 280-amino-acid chain; its full sequence is Lipase chaperone (280 aa).

A helical transmembrane segment spans residues 5–22; it reads ALTIITIALGSLGAVYFL.

Belongs to the lipase chaperone family.

Its subcellular location is the cell inner membrane. In terms of biological role, may be involved in the folding of the extracellular lipase during its passage through the periplasm. The protein is Lipase chaperone (lifO) of Vibrio vulnificus (strain CMCP6).